The sequence spans 177 residues: NAD(P)H-quinone oxidoreductase subunit 6, chloroplastic (177 aa).

A run of 5 helical transmembrane segments spans residues 10 to 30, 33 to 53, 61 to 81, 92 to 112, and 152 to 172; these read ILVV…VLFT, IYSA…YILL, AQLL…VMFM, LWTV…FLLI, and FFLP…GAIS.

Belongs to the complex I subunit 6 family. As to quaternary structure, NDH is composed of at least 16 different subunits, 5 of which are encoded in the nucleus.

The protein localises to the plastid. It is found in the chloroplast thylakoid membrane. It carries out the reaction a plastoquinone + NADH + (n+1) H(+)(in) = a plastoquinol + NAD(+) + n H(+)(out). The enzyme catalyses a plastoquinone + NADPH + (n+1) H(+)(in) = a plastoquinol + NADP(+) + n H(+)(out). In terms of biological role, NDH shuttles electrons from NAD(P)H:plastoquinone, via FMN and iron-sulfur (Fe-S) centers, to quinones in the photosynthetic chain and possibly in a chloroplast respiratory chain. The immediate electron acceptor for the enzyme in this species is believed to be plastoquinone. Couples the redox reaction to proton translocation, and thus conserves the redox energy in a proton gradient. This chain is NAD(P)H-quinone oxidoreductase subunit 6, chloroplastic (ndhG), found in Lemna minor (Common duckweed).